The following is a 49-amino-acid chain: Large ribosomal subunit protein bL33 (49 aa).

This sequence belongs to the bacterial ribosomal protein bL33 family.

The sequence is that of Large ribosomal subunit protein bL33 from Alkaliphilus oremlandii (strain OhILAs) (Clostridium oremlandii (strain OhILAs)).